The chain runs to 151 residues: SsrA-binding protein (151 aa).

This sequence belongs to the SmpB family.

It is found in the cytoplasm. Functionally, required for rescue of stalled ribosomes mediated by trans-translation. Binds to transfer-messenger RNA (tmRNA), required for stable association of tmRNA with ribosomes. tmRNA and SmpB together mimic tRNA shape, replacing the anticodon stem-loop with SmpB. tmRNA is encoded by the ssrA gene; the 2 termini fold to resemble tRNA(Ala) and it encodes a 'tag peptide', a short internal open reading frame. During trans-translation Ala-aminoacylated tmRNA acts like a tRNA, entering the A-site of stalled ribosomes, displacing the stalled mRNA. The ribosome then switches to translate the ORF on the tmRNA; the nascent peptide is terminated with the 'tag peptide' encoded by the tmRNA and targeted for degradation. The ribosome is freed to recommence translation, which seems to be the essential function of trans-translation. The sequence is that of SsrA-binding protein from Chlamydia trachomatis serovar A (strain ATCC VR-571B / DSM 19440 / HAR-13).